Reading from the N-terminus, the 329-residue chain is DNA-directed RNA polymerase subunit alpha (329 aa).

An alpha N-terminal domain (alpha-NTD) region spans residues 1-235; the sequence is MQGSVTEFLK…EQLEAFVDLR (235 aa). Residues 249 to 329 form an alpha C-terminal domain (alpha-CTD) region; the sequence is FDPILLRPVD…NWPPASIADE (81 aa).

The protein belongs to the RNA polymerase alpha chain family. Homodimer. The RNAP catalytic core consists of 2 alpha, 1 beta, 1 beta' and 1 omega subunit. When a sigma factor is associated with the core the holoenzyme is formed, which can initiate transcription.

It catalyses the reaction RNA(n) + a ribonucleoside 5'-triphosphate = RNA(n+1) + diphosphate. In terms of biological role, DNA-dependent RNA polymerase catalyzes the transcription of DNA into RNA using the four ribonucleoside triphosphates as substrates. The chain is DNA-directed RNA polymerase subunit alpha from Shigella flexneri serotype 5b (strain 8401).